We begin with the raw amino-acid sequence, 201 residues long: Adenylyl-sulfate kinase (201 aa).

An ATP-binding site is contributed by 35 to 42 (GLSGSGKS). Residue serine 109 is the Phosphoserine intermediate of the active site.

Belongs to the APS kinase family.

The catalysed reaction is adenosine 5'-phosphosulfate + ATP = 3'-phosphoadenylyl sulfate + ADP + H(+). The protein operates within sulfur metabolism; hydrogen sulfide biosynthesis; sulfite from sulfate: step 2/3. Its function is as follows. Catalyzes the synthesis of activated sulfate. The sequence is that of Adenylyl-sulfate kinase from Shigella boydii serotype 18 (strain CDC 3083-94 / BS512).